Reading from the N-terminus, the 1261-residue chain is Apoptotic protease-activating factor 1 (1261 aa).

The 90-residue stretch at Met-1 to Asp-90 folds into the CARD domain. The 312-residue stretch at Val-106 to Leu-417 folds into the NB-ARC domain. Gly-154–Ser-161 lines the ATP pocket. WD repeat units lie at residues Pro-615–Glu-654, Ala-657–Glu-696, Glu-700–Thr-743, Gly-746–Ser-785, Glu-798–Lys-836, Ser-840–Glu-879, Gly-882–Ala-921, Glu-964–Lys-1003, Gly-1006–Leu-1045, Gly-1047–Asp-1088, Cys-1091–Leu-1130, Gly-1133–Ile-1172, and Tyr-1184–Tyr-1223.

As to quaternary structure, monomer. Oligomerizes upon binding of cytochrome c and dATP.

It localises to the cytoplasm. Oligomeric Apaf-1 mediates the cytochrome c-dependent autocatalytic activation of pro-caspase-9 (Apaf-3), leading to the activation of caspase-3 and apoptosis. This activation requires ATP. This Danio rerio (Zebrafish) protein is Apoptotic protease-activating factor 1 (apaf1).